The following is a 395-amino-acid chain: Oxalate oxidoreductase subunit alpha (395 aa).

Dimer of heterotrimer of one alpha, one beta and one delta subunit.

It catalyses the reaction oxidized 2[4Fe-4S]-[ferredoxin] + oxalate = reduced 2[4Fe-4S]-[ferredoxin] + 2 CO2. Its function is as follows. Catalyzes the anaerobic oxidation of oxalate using a broad range of electron acceptors, including ferredoxin and the nickel-dependent carbon monoxide dehydrogenase. Does not require coenzyme A as cosubstrate. Enables anaerobic growth on oxalate which is used as energy source by the bacteria. This chain is Oxalate oxidoreductase subunit alpha, found in Moorella thermoacetica (strain ATCC 39073 / JCM 9320).